A 335-amino-acid chain; its full sequence is Glycerol-3-phosphate dehydrogenase [NAD(P)+] (335 aa).

Residues Ser-12, Trp-13, and Lys-107 each coordinate NADPH. Sn-glycerol 3-phosphate contacts are provided by Lys-107, Gly-138, and Ser-140. Ala-142 contributes to the NADPH binding site. Sn-glycerol 3-phosphate-binding residues include Lys-193, Asp-246, Ser-256, Arg-257, and Asn-258. The Proton acceptor role is filled by Lys-193. Arg-257 is a binding site for NADPH. NADPH is bound by residues Val-281 and Glu-283.

The protein belongs to the NAD-dependent glycerol-3-phosphate dehydrogenase family.

Its subcellular location is the cytoplasm. The enzyme catalyses sn-glycerol 3-phosphate + NAD(+) = dihydroxyacetone phosphate + NADH + H(+). The catalysed reaction is sn-glycerol 3-phosphate + NADP(+) = dihydroxyacetone phosphate + NADPH + H(+). It participates in membrane lipid metabolism; glycerophospholipid metabolism. Catalyzes the reduction of the glycolytic intermediate dihydroxyacetone phosphate (DHAP) to sn-glycerol 3-phosphate (G3P), the key precursor for phospholipid synthesis. This chain is Glycerol-3-phosphate dehydrogenase [NAD(P)+], found in Geobacter sp. (strain M21).